The chain runs to 492 residues: UDP-glucosyl transferase 73DL1 (492 aa).

Catalysis depends on histidine 27, which acts as the Proton acceptor. Catalysis depends on aspartate 131, which acts as the Charge relay. Positions 352, 353, 370, 375, 378, and 392 each coordinate UDP.

Belongs to the UDP-glycosyltransferase family. In terms of tissue distribution, mainly expressed in flowers, flower buds and young leaves, and, to a lesser extent, in old leaves, stems and roots.

The protein operates within secondary metabolite biosynthesis; terpenoid biosynthesis. Functionally, component of the oleanane-type triterpene saponins (e.g. saponarioside A and saponarioside B) biosynthetic pathway, leading to the production of natural products with detergent properties used as traditional sources of soap. A glycosyltransferase that mediates the conversion of QA-mono to QA-di via the elongation of the C-3 sugar chain with a D-galactose. The polypeptide is UDP-glucosyl transferase 73DL1 (Saponaria officinalis (Common soapwort)).